A 245-amino-acid polypeptide reads, in one-letter code: Orotidine 5'-phosphate decarboxylase (245 aa).

Substrate-binding positions include Asp-22, Lys-44, 71–80, Thr-131, Arg-192, Gln-201, Gly-221, and Arg-222; that span reads DLKFHDIPNT. Residue Lys-73 is the Proton donor of the active site.

This sequence belongs to the OMP decarboxylase family. Type 1 subfamily. In terms of assembly, homodimer.

The enzyme catalyses orotidine 5'-phosphate + H(+) = UMP + CO2. It functions in the pathway pyrimidine metabolism; UMP biosynthesis via de novo pathway; UMP from orotate: step 2/2. Functionally, catalyzes the decarboxylation of orotidine 5'-monophosphate (OMP) to uridine 5'-monophosphate (UMP). The protein is Orotidine 5'-phosphate decarboxylase of Escherichia coli O127:H6 (strain E2348/69 / EPEC).